We begin with the raw amino-acid sequence, 200 residues long: Recombination protein RecR (200 aa).

Residues 57 to 72 (CEHCRTFTEEDICSIC) form a C4-type zinc finger. Residues 81 to 176 (RLLCVVEMPA…KVSRIAHGIP (96 aa)) enclose the Toprim domain.

Belongs to the RecR family.

May play a role in DNA repair. It seems to be involved in an RecBC-independent recombinational process of DNA repair. It may act with RecF and RecO. The polypeptide is Recombination protein RecR (Mannheimia succiniciproducens (strain KCTC 0769BP / MBEL55E)).